Consider the following 51-residue polypeptide: MVAYWRQAGLSYIRYSQICAKVVRDALKTEFKANAKKTSGNSVKIVKVKKE.

Lysine 21 carries the N6-acetyllysine modification.

It belongs to the eukaryotic ATPase epsilon family. As to quaternary structure, F-type ATPases have 2 components, CF(1) - the catalytic core - and CF(0) - the membrane proton channel. CF(1) has five subunits: alpha(3), beta(3), gamma(1), delta(1), epsilon(1). CF(0) seems to have nine subunits: a, b, c, d, e, f, g, F6 and 8 (or A6L).

The protein localises to the mitochondrion inner membrane. In terms of biological role, mitochondrial membrane ATP synthase (F(1)F(0) ATP synthase or Complex V) produces ATP from ADP in the presence of a proton gradient across the membrane which is generated by electron transport complexes of the respiratory chain. F-type ATPases consist of two structural domains, F(1) - containing the extramembraneous catalytic core, and F(0) - containing the membrane proton channel, linked together by a central stalk and a peripheral stalk. During catalysis, ATP synthesis in the catalytic domain of F(1) is coupled via a rotary mechanism of the central stalk subunits to proton translocation. Part of the complex F(1) domain and of the central stalk which is part of the complex rotary element. Rotation of the central stalk against the surrounding alpha(3)beta(3) subunits leads to hydrolysis of ATP in three separate catalytic sites on the beta subunits. The protein is ATP synthase subunit epsilon-like protein, mitochondrial of Homo sapiens (Human).